Here is a 217-residue protein sequence, read N- to C-terminus: Large ribosomal subunit protein uL4 (217 aa).

The disordered stretch occupies residues 42 to 100 (RAAARQGTHSTKTRGDVSGGGRKPYRQKGTGRARQGSTRAPQFTGGGVVHGPKPRDYSQ).

It belongs to the universal ribosomal protein uL4 family. In terms of assembly, part of the 50S ribosomal subunit.

Functionally, one of the primary rRNA binding proteins, this protein initially binds near the 5'-end of the 23S rRNA. It is important during the early stages of 50S assembly. It makes multiple contacts with different domains of the 23S rRNA in the assembled 50S subunit and ribosome. Forms part of the polypeptide exit tunnel. The sequence is that of Large ribosomal subunit protein uL4 from Mycobacterium avium (strain 104).